The primary structure comprises 343 residues: N-acetyl-gamma-glutamyl-phosphate reductase (343 aa).

Cys149 is an active-site residue.

The protein belongs to the NAGSA dehydrogenase family. Type 1 subfamily.

The protein localises to the cytoplasm. It catalyses the reaction N-acetyl-L-glutamate 5-semialdehyde + phosphate + NADP(+) = N-acetyl-L-glutamyl 5-phosphate + NADPH + H(+). The protein operates within amino-acid biosynthesis; L-arginine biosynthesis; N(2)-acetyl-L-ornithine from L-glutamate: step 3/4. Its function is as follows. Catalyzes the NADPH-dependent reduction of N-acetyl-5-glutamyl phosphate to yield N-acetyl-L-glutamate 5-semialdehyde. The polypeptide is N-acetyl-gamma-glutamyl-phosphate reductase (Methanococcus maripaludis (strain C6 / ATCC BAA-1332)).